Reading from the N-terminus, the 314-residue chain is Melanoma-associated antigen 3 (314 aa).

A compositionally biased stretch (basic and acidic residues) spans 1–20 (MPLEQRSQHCKPEEGLEARG). The segment at 1-99 (MPLEQRSQHC…QEEEGPSTFP (99 aa)) is disordered. The segment covering 21–44 (EALGLVGAQAPATEEQEAASSSST) has biased composition (low complexity). A compositionally biased stretch (polar residues) spans 65 to 87 (PQGASSLPTTMNYPLWSQSYEDS). The 200-residue stretch at 109–308 (LSRKVAELVH…ISYPPLHEWV (200 aa)) folds into the MAGE domain.

Interacts with TRIM28. Ubiquitinated by the DCX(DCAF12) complex specifically recognizes the diglutamate (Glu-Glu) at the C-terminus, leading to its degradation. In terms of tissue distribution, expressed in many tumors of several types, such as melanoma, head and neck squamous cell carcinoma, lung carcinoma and breast carcinoma, but not in normal tissues except for testes and placenta. Never expressed in kidney tumors, Leukemias and lymphomas.

Activator of ubiquitin ligase activity of RING-type zinc finger-containing E3 ubiquitin-protein ligases that acts as a repressor of autophagy. May enhance ubiquitin ligase activity of TRIM28 and stimulate p53/TP53 ubiquitination by TRIM28. Proposed to act through recruitment and/or stabilization of the Ubl-conjugating enzyme (E2) at the E3:substrate complex. May play a role in embryonal development and tumor transformation or aspects of tumor progression. In vitro promotes cell viability in melanoma cell lines. Antigen recognized on a melanoma by autologous cytolytic T-lymphocytes. The protein is Melanoma-associated antigen 3 of Homo sapiens (Human).